Reading from the N-terminus, the 742-residue chain is Polyphosphate kinase (742 aa).

Asn-91 is a binding site for ATP. Mg(2+)-binding residues include Arg-431 and Arg-461. His-491 (phosphohistidine intermediate) is an active-site residue. 3 residues coordinate ATP: Tyr-524, Arg-624, and His-652. Positions 718–742 are disordered; the sequence is WTASPQEGHSVRDHQESLMERHRSP. Basic and acidic residues predominate over residues 726–742; it reads HSVRDHQESLMERHRSP.

Belongs to the polyphosphate kinase 1 (PPK1) family. Requires Mg(2+) as cofactor. Post-translationally, an intermediate of this reaction is the autophosphorylated ppk in which a phosphate is covalently linked to a histidine residue through a N-P bond.

It carries out the reaction [phosphate](n) + ATP = [phosphate](n+1) + ADP. Catalyzes the reversible transfer of the terminal phosphate of ATP to form a long-chain polyphosphate (polyP). This chain is Polyphosphate kinase, found in Mycobacterium bovis (strain ATCC BAA-935 / AF2122/97).